The sequence spans 365 residues: Cobalt-precorrin-5B C(1)-methyltransferase (365 aa).

It belongs to the CbiD family.

The enzyme catalyses Co-precorrin-5B + S-adenosyl-L-methionine = Co-precorrin-6A + S-adenosyl-L-homocysteine. Its pathway is cofactor biosynthesis; adenosylcobalamin biosynthesis; cob(II)yrinate a,c-diamide from sirohydrochlorin (anaerobic route): step 6/10. Catalyzes the methylation of C-1 in cobalt-precorrin-5B to form cobalt-precorrin-6A. The polypeptide is Cobalt-precorrin-5B C(1)-methyltransferase (Clostridium perfringens (strain SM101 / Type A)).